The following is a 141-amino-acid chain: Hemoglobin subunit alpha (141 aa).

In terms of domain architecture, Globin spans Val1–Arg141. A Phosphoserine modification is found at Ser3. N6-succinyllysine occurs at positions 7 and 11. Lys16 carries the post-translational modification N6-acetyllysine; alternate. Lys16 carries the post-translational modification N6-succinyllysine; alternate. Residue Tyr24 is modified to Phosphotyrosine. Position 35 is a phosphoserine (Ser35). The residue at position 40 (Lys40) is an N6-succinyllysine. Ser49 bears the Phosphoserine mark. His58 lines the O2 pocket. His87 lines the heme b pocket. Position 102 is a phosphoserine (Ser102). Position 108 is a phosphothreonine (Thr108). A Phosphoserine modification is found at Ser124. Residues Thr134 and Thr137 each carry the phosphothreonine modification. Ser138 carries the phosphoserine modification.

Belongs to the globin family. Heterotetramer of two alpha chains and two beta chains. As to expression, red blood cells.

In terms of biological role, involved in oxygen transport from the lung to the various peripheral tissues. Hemopressin acts as an antagonist peptide of the cannabinoid receptor CNR1. Hemopressin-binding efficiently blocks cannabinoid receptor CNR1 and subsequent signaling. This Talpa europaea (European mole) protein is Hemoglobin subunit alpha (HBA).